The chain runs to 248 residues: UPF0246 protein lp_0089 (248 aa).

The protein belongs to the UPF0246 family.

The protein is UPF0246 protein lp_0089 of Lactiplantibacillus plantarum (strain ATCC BAA-793 / NCIMB 8826 / WCFS1) (Lactobacillus plantarum).